Here is a 300-residue protein sequence, read N- to C-terminus: Formamidopyrimidine-DNA glycosylase (300 aa).

Pro-2 (schiff-base intermediate with DNA) is an active-site residue. Glu-3 (proton donor) is an active-site residue. The Proton donor; for beta-elimination activity role is filled by Lys-60. DNA-binding residues include His-108, Arg-136, and Arg-181. The segment at 266–300 (WVYSRAGQPCRICNTPLEKIKLAGRSTHFCPQCQK) adopts an FPG-type zinc-finger fold. Residue Arg-290 is the Proton donor; for delta-elimination activity of the active site.

It belongs to the FPG family. In terms of assembly, monomer. Zn(2+) is required as a cofactor.

The catalysed reaction is Hydrolysis of DNA containing ring-opened 7-methylguanine residues, releasing 2,6-diamino-4-hydroxy-5-(N-methyl)formamidopyrimidine.. It catalyses the reaction 2'-deoxyribonucleotide-(2'-deoxyribose 5'-phosphate)-2'-deoxyribonucleotide-DNA = a 3'-end 2'-deoxyribonucleotide-(2,3-dehydro-2,3-deoxyribose 5'-phosphate)-DNA + a 5'-end 5'-phospho-2'-deoxyribonucleoside-DNA + H(+). Involved in base excision repair of DNA damaged by oxidation or by mutagenic agents. Acts as a DNA glycosylase that recognizes and removes damaged bases. Has a preference for oxidized purines, such as 7,8-dihydro-8-oxoguanine (8-oxoG). Has AP (apurinic/apyrimidinic) lyase activity and introduces nicks in the DNA strand. Cleaves the DNA backbone by beta-delta elimination to generate a single-strand break at the site of the removed base with both 3'- and 5'-phosphates. The protein is Formamidopyrimidine-DNA glycosylase of Trichodesmium erythraeum (strain IMS101).